Reading from the N-terminus, the 398-residue chain is Succinate--CoA ligase [ADP-forming] subunit beta (398 aa).

Residues 9–253 form the ATP-grasp domain; sequence KEILASYGVR…IREENPIEVE (245 aa). ATP is bound by residues K50, 57-59, V106, and E116; that span reads GRG. The Mg(2+) site is built by N208 and D222. Residues N273 and 330 to 332 contribute to the substrate site; that span reads GIV.

Belongs to the succinate/malate CoA ligase beta subunit family. In terms of assembly, heterotetramer of two alpha and two beta subunits. The cofactor is Mg(2+).

The enzyme catalyses succinate + ATP + CoA = succinyl-CoA + ADP + phosphate. The catalysed reaction is GTP + succinate + CoA = succinyl-CoA + GDP + phosphate. The protein operates within carbohydrate metabolism; tricarboxylic acid cycle; succinate from succinyl-CoA (ligase route): step 1/1. In terms of biological role, succinyl-CoA synthetase functions in the citric acid cycle (TCA), coupling the hydrolysis of succinyl-CoA to the synthesis of either ATP or GTP and thus represents the only step of substrate-level phosphorylation in the TCA. The beta subunit provides nucleotide specificity of the enzyme and binds the substrate succinate, while the binding sites for coenzyme A and phosphate are found in the alpha subunit. The polypeptide is Succinate--CoA ligase [ADP-forming] subunit beta (Flavobacterium psychrophilum (strain ATCC 49511 / DSM 21280 / CIP 103535 / JIP02/86)).